We begin with the raw amino-acid sequence, 232 residues long: Phosphoribosylformylglycinamidine synthase subunit PurQ (232 aa).

The region spanning 2–232 (RIGVITFPGS…SVVRSTLVEA (231 aa)) is the Glutamine amidotransferase type-1 domain. Cys-85 acts as the Nucleophile in catalysis. Residues His-194 and Glu-196 contribute to the active site.

As to quaternary structure, part of the FGAM synthase complex composed of 1 PurL, 1 PurQ and 2 PurS subunits.

Its subcellular location is the cytoplasm. It carries out the reaction N(2)-formyl-N(1)-(5-phospho-beta-D-ribosyl)glycinamide + L-glutamine + ATP + H2O = 2-formamido-N(1)-(5-O-phospho-beta-D-ribosyl)acetamidine + L-glutamate + ADP + phosphate + H(+). It catalyses the reaction L-glutamine + H2O = L-glutamate + NH4(+). Its pathway is purine metabolism; IMP biosynthesis via de novo pathway; 5-amino-1-(5-phospho-D-ribosyl)imidazole from N(2)-formyl-N(1)-(5-phospho-D-ribosyl)glycinamide: step 1/2. Part of the phosphoribosylformylglycinamidine synthase complex involved in the purines biosynthetic pathway. Catalyzes the ATP-dependent conversion of formylglycinamide ribonucleotide (FGAR) and glutamine to yield formylglycinamidine ribonucleotide (FGAM) and glutamate. The FGAM synthase complex is composed of three subunits. PurQ produces an ammonia molecule by converting glutamine to glutamate. PurL transfers the ammonia molecule to FGAR to form FGAM in an ATP-dependent manner. PurS interacts with PurQ and PurL and is thought to assist in the transfer of the ammonia molecule from PurQ to PurL. The protein is Phosphoribosylformylglycinamidine synthase subunit PurQ of Leifsonia xyli subsp. xyli (strain CTCB07).